The following is a 129-amino-acid chain: MSGGRRKEEPPQPQLANGALKVSVWSKVLRSDAAWDDKDEFLDVIYWFRQIIALVLGVIWGVLPLRGFLGIAGFCLINAGVLYLYFSNYLQIDEEEYGGTWELTKEGFMTSFALFMVIWIIFYTAIHYD.

At 1–44 (MSGGRRKEEPPQPQLANGALKVSVWSKVLRSDAAWDDKDEFLDV) the chain is on the cytoplasmic side. Residues 45-65 (IYWFRQIIALVLGVIWGVLPL) form a helical membrane-spanning segment. Residue Arg-66 is a topological domain, lumenal. The chain crosses the membrane as a helical span at residues 67–84 (GFLGIAGFCLINAGVLYL). The Cytoplasmic portion of the chain corresponds to 85–103 (YFSNYLQIDEEEYGGTWEL). Residues 104–127 (TKEGFMTSFALFMVIWIIFYTAIH) form a helical membrane-spanning segment. Topologically, residues 128–129 (YD) are lumenal.

Belongs to the EMC6 family. As to quaternary structure, component of the GET- and EMC-like (GEL) complex, composed of RAB5IF/OPTI and TMCO1. The GEL complex is part of the multi-pass translocon (MPT) complex, composed of three subcomplexes, the GEL complex (composed of RAB5IF/OPTI and TMCO1), the BOS complex (composed of NCLN/Nicalin, NOMO1 and TMEM147) and the PAT complex (composed of WDR83OS/Asterix and CCDC47). The MPT complex associates with the SEC61 complex. Interacts with NDUFS3, NDUFA4, NDUFV1, NDUFA9 and NDUFS8 of the mitochondrial membrane respiratory chain NADH dehydrogenase (Complex I). Interacts with UQCRC2 of the ubiquinol-cytochrome c reductase complex (Complex III). Interacts with COX5A and COX7C of the cytochrome c oxidase complex (Complex IV). Expressed in neuronal cells.

Its subcellular location is the endoplasmic reticulum membrane. It is found in the mitochondrion inner membrane. Functionally, component of the multi-pass translocon (MPT) complex that mediates insertion of multi-pass membrane proteins into the lipid bilayer of membranes. The MPT complex takes over after the SEC61 complex: following membrane insertion of the first few transmembrane segments of proteins by the SEC61 complex, the MPT complex occludes the lateral gate of the SEC61 complex to promote insertion of subsequent transmembrane regions. Within the MPT complex, the GEL subcomplex may mediate insertion of transmembrane regions into the membrane. In addition to its role in multi-pass membrane insertion, RAB5IF/OPTI also acts as an assembly factor for mitochondrial respiratory complexes. The polypeptide is GEL complex subunit OPTI (Mus musculus (Mouse)).